The primary structure comprises 88 residues: Small ribosomal subunit protein uS17 (88 aa).

It belongs to the universal ribosomal protein uS17 family. Part of the 30S ribosomal subunit.

In terms of biological role, one of the primary rRNA binding proteins, it binds specifically to the 5'-end of 16S ribosomal RNA. The polypeptide is Small ribosomal subunit protein uS17 (Lactobacillus helveticus (strain DPC 4571)).